The chain runs to 574 residues: MWRRIFAHGLKYDQPNASSKNLILSVLNTTATKREAKDYLSKYTNDSGQHNHCLFFIRDLHKVAPAILSQFSSVIKRLGMLGLRPMFVIPPSPTHVNIQAELLDSIVTEADLKPLHFKEGLTKSRTGLYHSVFSQESRFFDIGNSNFIPIVKPYVYNEETASEFMTKDVVKFMDCLCQGNIPHIDKFFILNNAGGIPSGERNDNAHVFINLSQELEHLSSSLSHNISTLTKREPRSQNLLHRMEVYVKKDEISSLECEYHDHLENLLLMDKVLSNLAATATGLITTVKAAALSSDRKNPLVYNLLTDRSLISSSLPRFKKKDGEIDSPANMFDDHAWYELPSQQVNAAPSNSDAVLVTTVLKKGVHIKTYDYKTLTQFNSIGLPKEFHVSEKGAKPSNNSPKLDINKFKSIIDQSFKRSLDLHDYIKRINGKIATIIVIGDYEGIAILTYEGSEENSFVYLDKFAVLPHLKGSLGISDIIFNLMFKKFPNEILWRSRKDNVVNKWYFQRSVAVLDLSIDLDPEHCDEKQSQFKLFYYGNPQYAKRALRDKKRLREFMRSVRDIKPSWENEKNIS.

Residues 1–13 (MWRRIFAHGLKYD) constitute a mitochondrion transit peptide. The region spanning 392-560 (KGAKPSNNSP…KRLREFMRSV (169 aa)) is the N-acetyltransferase domain.

This sequence belongs to the acetyltransferase family. As to quaternary structure, interacts with the acetylglutamate kinase chain of AGR5,6.

Its subcellular location is the mitochondrion. The catalysed reaction is L-glutamate + acetyl-CoA = N-acetyl-L-glutamate + CoA + H(+). Its pathway is amino-acid biosynthesis; L-arginine biosynthesis; N(2)-acetyl-L-ornithine from L-glutamate: step 1/4. With respect to regulation, feedback inhibition by L-arginine. Its function is as follows. N-acetylglutamate synthase involved in arginine biosynthesis. The sequence is that of Amino-acid acetyltransferase, mitochondrial (ARG2) from Saccharomyces cerevisiae (strain YJM789) (Baker's yeast).